Reading from the N-terminus, the 49-residue chain is uncharacterized protein (49 aa).

This sequence belongs to the ELIP/psbS family.

Its subcellular location is the plastid. The protein resides in the cyanelle. Functionally, possible role in chlorophyll and/or carotenoid binding. This is an uncharacterized protein from Cyanophora paradoxa.